The following is a 1194-amino-acid chain: Probable disease resistance protein RPP1 (1194 aa).

Residues 1–27 (MGSVMSLGCSKRKATNQDVDSESRKRR) form a disordered region. The TIR domain maps to 96–260 (WKHDVFPSFH…KISTDVSNML (165 aa)). 105-110 (HGADVR) is a binding site for NAD(+). The active site involves Glu171. Residues 280–535 (DMLEQLLRLD…ACLFNGESTT (256 aa)) form the NB-ARC domain. 14 LRR repeats span residues 623 to 647 (LSNT…HFVR), 658 to 681 (QLAL…GYES), 690 to 713 (PEFL…TKQL), 714 to 737 (RNLK…STAT), 739 to 760 (LEEL…IEKL), 761 to 784 (TSLQ…ENAT), 786 to 807 (LREL…IGTA), 808 to 831 (TNLK…IGDI), 832 to 855 (TDLE…IGNL), 866 to 878 (CSKL…NINL), 879 to 899 (KSLD…PEIS), 900 to 922 (THIS…IMSW), 943 to 965 (FDII…VKRM), and 966 to 991 (SRLR…SLDY). Positions 1170 to 1194 (RRSSSPDLSPESSRVSSYDHCLRGD) are disordered. The span at 1171–1185 (RSSSPDLSPESSRVS) shows a compositional bias: low complexity.

It belongs to the disease resistance TIR-NB-LRR family.

It catalyses the reaction NAD(+) + H2O = ADP-D-ribose + nicotinamide + H(+). TIR-NB-LRR receptor-like protein that confers resistance to the pathogen Hyaloperonospora arabidopsis. Probably acts as a NAD(+) hydrolase (NADase): in response to activation, catalyzes cleavage of NAD(+) into ADP-D-ribose (ADPR) and nicotinamide; NAD(+) cleavage triggering a defense system that promotes cell death. This chain is Probable disease resistance protein RPP1, found in Arabidopsis thaliana (Mouse-ear cress).